The chain runs to 85 residues: Large ribosomal subunit protein bL27 (85 aa).

Residues 1–20 (MAHKKAGGSTRNGRDSESKR) form a disordered region.

Belongs to the bacterial ribosomal protein bL27 family.

This Yersinia pseudotuberculosis serotype O:1b (strain IP 31758) protein is Large ribosomal subunit protein bL27.